A 279-amino-acid chain; its full sequence is Methyltransferase ausD (279 aa).

S-adenosyl-L-methionine is bound by residues 124-125 (DI) and 152-153 (DV).

The protein belongs to the class I-like SAM-binding methyltransferase superfamily. As to quaternary structure, homodimer.

It participates in secondary metabolite biosynthesis; terpenoid biosynthesis. Functionally, methyltransferase; part of the gene cluster A that mediates the biosynthesis of the fungal meroterpenoid acetoxydehydroaustin. The first step of the pathway is the synthesis of 3,5-dimethylorsellinic acid by the polyketide synthase ausA. 3,5-dimethylorsellinic acid is then prenylated by the polyprenyl transferase ausN. Further epoxidation by the FAD-dependent monooxygenase ausM and cyclization by the probable terpene cyclase ausL lead to the formation of protoaustinoid A. Protoaustinoid A is then oxidized to spiro-lactone preaustinoid A3 by the combined action of the FAD-binding monooxygenases ausB and ausC, and the dioxygenase ausE. Acid-catalyzed keto-rearrangement and ring contraction of the tetraketide portion of preaustinoid A3 by ausJ lead to the formation of preaustinoid A4. The aldo-keto reductase ausK, with the help of ausH, is involved in the next step by transforming preaustinoid A4 into isoaustinone which is in turn hydroxylated by the P450 monooxygenase ausI to form austinolide. The cytochrome P450 monooxygenase ausG then modifies austinolide to austinol. Austinol is further acetylated to austin by the O-acetyltransferase ausP, which spontaneously changes to dehydroaustin. The cytochrome P450 monooxygenase then converts dehydroaustin is into 7-dehydrodehydroaustin. The hydroxylation catalyzed by ausR permits the second O-acetyltransferase ausQ to add an additional acetyl group to the molecule, leading to the formation of acetoxydehydroaustin. Due to genetic rearrangements of the clusters and the subsequent loss of some enzymes, the end product of the Penicillium brasilianum austinoid biosynthesis clusters is acetoxydehydroaustin. The polypeptide is Methyltransferase ausD (Penicillium brasilianum).